An 842-amino-acid chain; its full sequence is MINESVSKREGFHESISRETSASNALGLYNKFNDERNPRYRTMIAELHEFFHLTLAETITETDVKELECNKEKAAKFRKLMPKMLNNCRELTQRKSYIPYNSEFNGNDEKQKKFQLLHQHQIVLSFQEFCDELAKLIIDAHVLSFLTRCDYSYEIIPKNWTSFYKLFQYVMGAVGPIISYVPVNYPMIRKELGFETLTIFQYYDSKLFECMKSHFGREFSTLVSATIHHYIHMFPITNTMLEKEVPMLRIMSNCNFSIEGLSPKDFYMKTLRQYYCEESNLRPRLETFKNFKVLLTRNALLASLFSPEWVSDANDLFISHLLLNKKSISEYIEIGKDTYDEEKERYFKTETHFSLLMFRNAFEAKNMLSKFKEFCDDAVSEKLKAAYGSNHDTERLFDEVVQLANVDHLKIYSDSIEYHLCNLLGSTSKAIEQYVKYFESHLFIIVRKIKTTKKDLPRDMKIKYLNENLPILRLKFVNLPTFPNFFERSIFRKTILQSDQNSSFIKDILPVYKDSLMELFKQRIITNVSQEDEMRYRDQYQPYLSQFFQPVEVMADLRIKYASFLSFYENIEAAVKFGKTYNENNSKSFFPLIFDRERIPKVFQQSNEVKKNFVLPQEMDDTWNQFLRNYHEQNKVEDSDASKKELYPMWNLHHCEVESPYIIQDGTNLIFELTLFQTCVLTLFNESDHLTLQVISEQTKLAYKDLALVLKSFCNYKILTRDIDNTYSINESFKPDMKKVKNGKLRVVLPRTASLQSSNTGGERTSSAHHEGSNSQWTQELLKACITRSVKSERNGLDYDHLFETVKQQIKGFSVGEFKDALAKLLRDKFITRDESTATYKY.

A required for interaction with MMS1 region spans residues 1–50 (MINESVSKREGFHESISRETSASNALGLYNKFNDERNPRYRTMIAELHEF). Over residues 755-765 (LQSSNTGGERT) the composition is skewed to polar residues. The interval 755-775 (LQSSNTGGERTSSAHHEGSNS) is disordered. Lys-791 is covalently cross-linked (Glycyl lysine isopeptide (Lys-Gly) (interchain with G-Cter in NEDD8)).

It belongs to the cullin family. Component of multiple cullin-RING ligases (CRLs) composed of 4 subunits: the RING protein HRT1, the cullin RTT101, a linker protein MMS1, and one of many alternative substrate receptors belonging to a protein family described as DCAF (DDB1- and CUL4-associated factor). Component of a RTT101(MMS1-MMS22) complex with the substrate receptor MMS22. This complex further interacts with RTT107 and CTF4 to form RTT101-MMS1-MMS22-RTT107 and RTT101-MMS1-MMS22-CTF4 complexes respectively. Component of a RTT101(MSS1-CRT10) complex with the substrate receptor CRT10. Component of a RTT101(MSS1-ESC2) complex with the potential substrate receptor ESC2. Component of a RTT101(MSS1-ORC5) complex with the potential substrate receptor ORC5. Interacts (via C-ter) with HRT1; required for ubiquitin-ligase activity. Interacts (via N-ter) with MMS1. In terms of processing, neddylated. HRT1-binding is necessary for RUB1/NEDD8 modification of RTT101. The modification enhances ubiquitin-ligase activity.

The protein resides in the cytoplasm. The protein localises to the nucleus. Its pathway is protein modification; protein ubiquitination. Its function is as follows. Core component of multiple cullin-RING-based E3 ubiquitin-protein ligase complexes (CRLs), which mediate the ubiquitination of target proteins. As a scaffold protein may contribute to catalysis through positioning of the substrate and the ubiquitin-conjugating enzyme. The CRL associates with CDC34 as the E2 ubiquitin-conjugating enzyme. The functional specificity of the CRL depends on the type of the associated substrate receptor protein. RTT101(MMS1-MMS22) promotes fork progression through damaged DNA or natural pause sites by stabilizing replication proteins like the replication fork-pausing complex (FPC) and leading-strand polymerase at stalled replication forks. RTT101(MMS1-MMS22) ubiquitinates the acetylated histones H3K56ac-H4 at lysine residues H3K121, H3K122 and H3K125. Ubiquitination is required for efficient histone deposition during replication-coupled nucleosome assembly, probably by facilitating the transfer of H3-H4 from ASF1 to other chaperones involved in histone deposition. RTT101(MMS1-CRT10) may regulate nucleotide synthesis through transcriptional regulation of ribonucleotide reductase. RTT101(MMS1) is also involved in the non-functional rRNA decay (NRD) of 25S rRNA through the selective, ubiquitination-dependent degradation of nonfunctional ribosomal particles. Ubiquitinates the FACT (facilitates chromatin transcription) complex subunit SPT16 in an MMS1-independent manner. Involved in regulation of Ty1 transposition and protects the genome from Ty1 integration upstream of tRNA genes. This Saccharomyces cerevisiae (strain ATCC 204508 / S288c) (Baker's yeast) protein is Cullin-8 (RTT101).